The following is a 1490-amino-acid chain: DNA-directed RNA polymerase subunit beta' (1490 aa).

Positions 67, 69, 82, and 85 each coordinate Zn(2+). Mg(2+) contacts are provided by Asp499, Asp501, and Asp503. 4 residues coordinate Zn(2+): Cys868, Cys944, Cys951, and Cys954.

Belongs to the RNA polymerase beta' chain family. The RNAP catalytic core consists of 2 alpha, 1 beta, 1 beta' and 1 omega subunit. When a sigma factor is associated with the core the holoenzyme is formed, which can initiate transcription. Mg(2+) is required as a cofactor. Requires Zn(2+) as cofactor.

The enzyme catalyses RNA(n) + a ribonucleoside 5'-triphosphate = RNA(n+1) + diphosphate. DNA-dependent RNA polymerase catalyzes the transcription of DNA into RNA using the four ribonucleoside triphosphates as substrates. This Chlorobaculum tepidum (strain ATCC 49652 / DSM 12025 / NBRC 103806 / TLS) (Chlorobium tepidum) protein is DNA-directed RNA polymerase subunit beta'.